Consider the following 150-residue polypeptide: Large ribosomal subunit protein bL9 (150 aa).

The protein belongs to the bacterial ribosomal protein bL9 family.

Its function is as follows. Binds to the 23S rRNA. The sequence is that of Large ribosomal subunit protein bL9 from Burkholderia cenocepacia (strain HI2424).